A 392-amino-acid chain; its full sequence is Large ribosomal subunit protein uL3 (392 aa).

This sequence belongs to the universal ribosomal protein uL3 family. Component of the large ribosomal subunit (LSU). Mature N.crassa ribosomes consist of a small (40S) and a large (60S) subunit. The 40S small subunit contains 1 molecule of ribosomal RNA (18S rRNA) and at least 32 different proteins. The large 60S subunit contains 3 rRNA molecules (26S, 5.8S and 5S rRNA) and at least 42 different proteins.

Its subcellular location is the cytoplasm. Component of the ribosome, a large ribonucleoprotein complex responsible for the synthesis of proteins in the cell. The small ribosomal subunit (SSU) binds messenger RNAs (mRNAs) and translates the encoded message by selecting cognate aminoacyl-transfer RNA (tRNA) molecules. The large subunit (LSU) contains the ribosomal catalytic site termed the peptidyl transferase center (PTC), which catalyzes the formation of peptide bonds, thereby polymerizing the amino acids delivered by tRNAs into a polypeptide chain. The nascent polypeptides leave the ribosome through a tunnel in the LSU and interact with protein factors that function in enzymatic processing, targeting, and the membrane insertion of nascent chains at the exit of the ribosomal tunnel. This is Large ribosomal subunit protein uL3 (rpl-3) from Neurospora crassa (strain ATCC 24698 / 74-OR23-1A / CBS 708.71 / DSM 1257 / FGSC 987).